The following is a 258-amino-acid chain: UPF0246 protein YE0603 (258 aa).

Belongs to the UPF0246 family.

The polypeptide is UPF0246 protein YE0603 (Yersinia enterocolitica serotype O:8 / biotype 1B (strain NCTC 13174 / 8081)).